The following is a 599-amino-acid chain: Proline--tRNA ligase (599 aa).

The protein belongs to the class-II aminoacyl-tRNA synthetase family. ProS type 1 subfamily. As to quaternary structure, homodimer.

Its subcellular location is the cytoplasm. The enzyme catalyses tRNA(Pro) + L-proline + ATP = L-prolyl-tRNA(Pro) + AMP + diphosphate. Its function is as follows. Catalyzes the attachment of proline to tRNA(Pro) in a two-step reaction: proline is first activated by ATP to form Pro-AMP and then transferred to the acceptor end of tRNA(Pro). As ProRS can inadvertently accommodate and process non-cognate amino acids such as alanine and cysteine, to avoid such errors it has two additional distinct editing activities against alanine. One activity is designated as 'pretransfer' editing and involves the tRNA(Pro)-independent hydrolysis of activated Ala-AMP. The other activity is designated 'posttransfer' editing and involves deacylation of mischarged Ala-tRNA(Pro). The misacylated Cys-tRNA(Pro) is not edited by ProRS. In Bifidobacterium animalis subsp. lactis (strain AD011), this protein is Proline--tRNA ligase.